We begin with the raw amino-acid sequence, 231 residues long: Ion-translocating oxidoreductase complex subunit E (231 aa).

Helical transmembrane passes span 18–38 (ALVQ…ATNA), 39–59 (LGLG…ISTL), 63–83 (TPAE…VSAV), 86–106 (LINA…PLIV), 125–145 (ALSA…MFVL), and 182–202 (PFLL…MLAG).

Belongs to the NqrDE/RnfAE family. In terms of assembly, the complex is composed of six subunits: RsxA, RsxB, RsxC, RsxD, RsxE and RsxG.

The protein localises to the cell inner membrane. In terms of biological role, part of a membrane-bound complex that couples electron transfer with translocation of ions across the membrane. Required to maintain the reduced state of SoxR. The sequence is that of Ion-translocating oxidoreductase complex subunit E from Escherichia coli (strain SE11).